Here is a 412-residue protein sequence, read N- to C-terminus: Isovaleryl-CoA dehydrogenase, mitochondrial (412 aa).

The transit peptide at Met-1–Phe-25 directs the protein to the mitochondrion. Residues Leu-154–Ser-163 and Trp-187–Thr-189 each bind FAD. Ser-163 lines the substrate pocket. Substrate is bound by residues Ser-209–Lys-210, Tyr-264, and Asp-271–Arg-274. The active-site Proton acceptor is Glu-273. FAD is bound by residues Arg-299, Gln-310, and Gln-367 to Gly-371. Residue Ala-394–Gly-395 coordinates substrate. Residue Thr-396–Glu-398 participates in FAD binding.

This sequence belongs to the acyl-CoA dehydrogenase family. Homotetramer. It depends on FAD as a cofactor. Expressed in flowers and tubers.

It localises to the mitochondrion. It catalyses the reaction 3-methylbutanoyl-CoA + oxidized [electron-transfer flavoprotein] + H(+) = 3-methylbut-2-enoyl-CoA + reduced [electron-transfer flavoprotein]. It participates in amino-acid degradation; L-leucine degradation; (S)-3-hydroxy-3-methylglutaryl-CoA from 3-isovaleryl-CoA: step 1/3. Functionally, involved in the catabolism of amino acids. Uses isovaleryl-CoA as substrate. Minor activity detected with 2-methylpalmitoyl-CoA or 2-methylbutanoyl-CoA, but no activity with short- and medium-straight chain acyl-CoA esters or with 2-methylhexanoyl-CoA. The protein is Isovaleryl-CoA dehydrogenase, mitochondrial (IVD) of Solanum tuberosum (Potato).